Here is a 133-residue protein sequence, read N- to C-terminus: MARGGMEARAQTQVKTPVVGKHVYGELYGVDEKLLQDEGRLRQIVIEAAHIANMHLVEVNSWRFKGGDKEGVSVIALVLESHIAIHTWPTYKFATVDVYTCGEHSDPMSAFRYIVSQLSPKRFTVNYSDRSYK.

The Schiff-base intermediate with substrate; via pyruvic acid role is filled by Ser-81. Residue Ser-81 is modified to Pyruvic acid (Ser); by autocatalysis. His-86 (proton acceptor; for processing activity) is an active-site residue. Cys-101 functions as the Proton donor; for catalytic activity in the catalytic mechanism.

Belongs to the prokaryotic AdoMetDC family. Type 1 subfamily. As to quaternary structure, heterooctamer of four alpha and four beta chains arranged as a tetramer of alpha/beta heterodimers. Pyruvate is required as a cofactor. Is synthesized initially as an inactive proenzyme. Formation of the active enzyme involves a self-maturation process in which the active site pyruvoyl group is generated from an internal serine residue via an autocatalytic post-translational modification. Two non-identical subunits are generated from the proenzyme in this reaction, and the pyruvate is formed at the N-terminus of the alpha chain, which is derived from the carboxyl end of the proenzyme. The post-translation cleavage follows an unusual pathway, termed non-hydrolytic serinolysis, in which the side chain hydroxyl group of the serine supplies its oxygen atom to form the C-terminus of the beta chain, while the remainder of the serine residue undergoes an oxidative deamination to produce ammonia and the pyruvoyl group blocking the N-terminus of the alpha chain.

It carries out the reaction L-arginine + H(+) = agmatine + CO2. The protein operates within amine and polyamine biosynthesis; agmatine biosynthesis; agmatine from L-arginine: step 1/1. In terms of biological role, specifically catalyzes the decarboxylation of L-arginine to agmatine. Has no S-adenosylmethionine decarboxylase (AdoMetDC) activity. This Pyrobaculum arsenaticum (strain DSM 13514 / JCM 11321 / PZ6) protein is Arginine decarboxylase proenzyme.